The primary structure comprises 601 residues: Elongation factor 4 (601 aa).

The region spanning 8 to 189 is the tr-type G domain; that stretch reads EQIRNFGIIA…LIVRKAPPPK (182 aa). Residue 20 to 25 participates in GTP binding; the sequence is DHGKST.

This sequence belongs to the TRAFAC class translation factor GTPase superfamily. Classic translation factor GTPase family. LepA subfamily.

The protein resides in the cell membrane. The catalysed reaction is GTP + H2O = GDP + phosphate + H(+). Functionally, required for accurate and efficient protein synthesis under certain stress conditions. May act as a fidelity factor of the translation reaction, by catalyzing a one-codon backward translocation of tRNAs on improperly translocated ribosomes. Back-translocation proceeds from a post-translocation (POST) complex to a pre-translocation (PRE) complex, thus giving elongation factor G a second chance to translocate the tRNAs correctly. Binds to ribosomes in a GTP-dependent manner. This is Elongation factor 4 from Tropheryma whipplei (strain TW08/27) (Whipple's bacillus).